Here is a 432-residue protein sequence, read N- to C-terminus: Adenylosuccinate synthetase (432 aa).

GTP is bound by residues 12 to 18 and 40 to 42; these read GDEGKGK and GHT. The active-site Proton acceptor is the D13. Mg(2+)-binding residues include D13 and G40. Residues 13–16, 38–41, T132, R146, Q226, T241, and R305 each bind IMP; these read DEGK and NAGH. The active-site Proton donor is H41. 301–307 is a binding site for substrate; it reads TVTGRKR. GTP is bound by residues R307, 333-335, and 415-417; these read KLD and STS.

Belongs to the adenylosuccinate synthetase family. In terms of assembly, homodimer. Requires Mg(2+) as cofactor.

The protein localises to the cytoplasm. The enzyme catalyses IMP + L-aspartate + GTP = N(6)-(1,2-dicarboxyethyl)-AMP + GDP + phosphate + 2 H(+). The protein operates within purine metabolism; AMP biosynthesis via de novo pathway; AMP from IMP: step 1/2. Plays an important role in the de novo pathway of purine nucleotide biosynthesis. Catalyzes the first committed step in the biosynthesis of AMP from IMP. The chain is Adenylosuccinate synthetase from Rhizobium etli (strain ATCC 51251 / DSM 11541 / JCM 21823 / NBRC 15573 / CFN 42).